A 398-amino-acid polypeptide reads, in one-letter code: Phospholipase C (398 aa).

A signal peptide spans 1–28 (MKRKICKALICAALATSLWAGASTKVYA). Residues Trp29, His39, Asp84, His96, His154, Asp158, His164, His176, and Glu180 each contribute to the Zn(2+) site. The Zn-dependent PLC domain occupies 29–278 (WDGKIDGTGT…HDVSEGNDPS (250 aa)). Residues 275–283 (NDPSVGKNV) are linker. The region spanning 284 to 398 (KELVAYISTS…ISGNSTYNIK (115 aa)) is the PLAT domain. Asp297, Gly299, Thr300, Asp301, Asp321, Asn322, Gly324, Asn325, Asp326, Asp364, and Ala365 together coordinate Ca(2+).

This sequence belongs to the bacterial zinc-metallophospholipase C family. The cofactor is Ca(2+). Zn(2+) is required as a cofactor.

It localises to the secreted. It carries out the reaction a 1,2-diacyl-sn-glycero-3-phosphocholine + H2O = phosphocholine + a 1,2-diacyl-sn-glycerol + H(+). Bacterial hemolysins are exotoxins that attack blood cell membranes and cause cell rupture. Constitutes an essential virulence factor in gas gangrene. Binds to eukaryotic membranes where it hydrolyzes both phosphatidylcholine and sphingomyelin. The diacylglycerol produced can activate both the arachidonic acid pathway, leading to modulation of the inflammatory response cascade and thrombosis, and protein kinase C, leading to activation of eukaryotic phospholipases and further membrane damage. Acts on human and mouse erythrocytes, but not on rabbit or horse erythrocytes. This Clostridium perfringens (strain ATCC 13124 / DSM 756 / JCM 1290 / NCIMB 6125 / NCTC 8237 / Type A) protein is Phospholipase C (plc).